We begin with the raw amino-acid sequence, 561 residues long: DNA ligase B (561 aa).

The N6-AMP-lysine intermediate role is filled by K125.

It belongs to the NAD-dependent DNA ligase family. LigB subfamily.

It catalyses the reaction NAD(+) + (deoxyribonucleotide)n-3'-hydroxyl + 5'-phospho-(deoxyribonucleotide)m = (deoxyribonucleotide)n+m + AMP + beta-nicotinamide D-nucleotide.. Catalyzes the formation of phosphodiester linkages between 5'-phosphoryl and 3'-hydroxyl groups in double-stranded DNA using NAD as a coenzyme and as the energy source for the reaction. The protein is DNA ligase B of Salmonella heidelberg (strain SL476).